A 266-amino-acid chain; its full sequence is Metallo-beta-lactamase VIM-2 (266 aa).

The N-terminal stretch at 1 to 20 (MFKLLSKLLVYLTASIMAIA) is a signal peptide. The Zn(2+) site is built by His114, His116, and Cys198.

This sequence belongs to the metallo-beta-lactamase superfamily. Class-B beta-lactamase family. As to quaternary structure, monomer. It depends on Zn(2+) as a cofactor.

The protein resides in the periplasm. It carries out the reaction a beta-lactam + H2O = a substituted beta-amino acid. Inhibited by chelating agents such as EDTA. Inhibited by a fungal natural product, aspergillomarasmine A (AMA). Inhibited by 2-triazolylthioacetamides. Functionally, class B beta-lactamase which confers resistance to the beta-lactam antibiotics, including penicillins, cephalosporins and carbapenems. Acts via hydrolysis of the beta-lactam ring. Has penicillin-, cephalosporin- and carbapenem-hydrolyzing activities. The polypeptide is Metallo-beta-lactamase VIM-2 (Escherichia coli).